The chain runs to 1017 residues: A-type ATP synthase subunit A (1017 aa).

Residues 396 to 529 (FLGYLIADGT…FSYLLAKLGI (134 aa)) enclose the DOD-type homing endonuclease domain.

The protein belongs to the ATPase alpha/beta chains family. In terms of assembly, has multiple subunits with at least A(3), B(3), C, D, E, F, H, I and proteolipid K(x). In terms of processing, this protein undergoes a protein self splicing that involves a post-translational excision of the VDE intervening region (intein) followed by peptide ligation.

It localises to the cell membrane. The catalysed reaction is ATP + H2O + 4 H(+)(in) = ADP + phosphate + 5 H(+)(out). Component of the A-type ATP synthase that produces ATP from ADP in the presence of a proton gradient across the membrane. The A chain is the catalytic subunit. This Pyrococcus abyssi (strain GE5 / Orsay) protein is A-type ATP synthase subunit A.